A 543-amino-acid chain; its full sequence is Early growth response protein 1 (543 aa).

Disordered regions lie at residues 1–105 (MAAA…AESF), 165–213 (TNPP…PTPN), and 264–284 (LGLG…TQQP). The segment covering 57 to 66 (GSGSNSSSSS) has biased composition (low complexity). The segment covering 67–77 (SGGGGGGGGGS) has biased composition (gly residues). Positions 167-189 (PPASSSSAPSPAASSASASQSPP) are enriched in low complexity. Residue Lys305 forms a Glycyl lysine isopeptide (Lys-Gly) (interchain with G-Cter in SUMO2) linkage. Residues 318-339 (PSRMRKYPNRPSKTPPHERPYA) form a disordered region. 3 consecutive C2H2-type zinc fingers follow at residues 338–362 (YACP…IRIH), 368–390 (FQCR…IRTH), and 396–418 (FACD…TKIH). Residues 409-487 (DERKRHTKIH…GSSTYPSPVH (79 aa)) form a disordered region. The span at 413–423 (RHTKIHLRQKD) shows a compositional bias: basic residues. A compositionally biased stretch (low complexity) spans 429 to 486 (SVVASSATSSLSSYPSPVATSYPSPVTTSYPSPATTSYPSPVPTSFSSPGSSTYPSPV).

The protein belongs to the EGR C2H2-type zinc-finger protein family. In terms of assembly, interacts with SNAI1 and SP1 upon 12-O-tetradecanoylphorbol-13-acetate (TPA) induction. As to expression, detected in neutrophils (at protein level).

It localises to the nucleus. The protein resides in the cytoplasm. Transcriptional regulator. Recognizes and binds to the DNA sequence 5'-GCG(T/G)GGGCG-3'(EGR-site) in the promoter region of target genes. Binds double-stranded target DNA, irrespective of the cytosine methylation status. Regulates the transcription of numerous target genes, and thereby plays an important role in regulating the response to growth factors, DNA damage, and ischemia. Plays a role in the regulation of cell survival, proliferation and cell death. Activates expression of p53/TP53 and TGFB1, and thereby helps prevent tumor formation. Required for normal progress through mitosis and normal proliferation of hepatocytes after partial hepatectomy. Mediates responses to ischemia and hypoxia; regulates the expression of proteins such as IL1B and CXCL2 that are involved in inflammatory processes and development of tissue damage after ischemia. Regulates biosynthesis of luteinizing hormone (LHB) in the pituitary. Regulates the amplitude of the expression rhythms of clock genes: BMAL1, PER2 and NR1D1 in the liver via the activation of PER1 (clock repressor) transcription. Regulates the rhythmic expression of core-clock gene BMAL1 in the suprachiasmatic nucleus (SCN). The sequence is that of Early growth response protein 1 (EGR1) from Homo sapiens (Human).